The following is a 167-amino-acid chain: Signal peptidase complex catalytic subunit SEC11 (167 aa).

Residues 1–12 are Cytoplasmic-facing; that stretch reads MNLRLELTRFLK. A helical; Signal-anchor for type II membrane protein transmembrane segment spans residues 13–30; it reads LCFVLSSAFMFWKGLSIA. Topologically, residues 31-167 are lumenal; it reads TNSHSPIVVV…LGISALLSNE (137 aa). Active-site charge relay system residues include S44, H83, and D109. A C-terminal short (CTS) helix region spans residues 153–164; that stretch reads ALMGFLGISALL.

This sequence belongs to the peptidase S26B family. In terms of assembly, component of the signal peptidase complex (SPC) composed of a catalytic subunit SEC11 and three accessory subunits SPC1, SPC2 and SPC3. The complex induces a local thinning of the ER membrane which is used to measure the length of the signal peptide (SP) h-region of protein substrates. This ensures the selectivity of the complex towards h-regions shorter than 18-20 amino acids. SPC associates with the translocon complex.

It is found in the endoplasmic reticulum membrane. The enzyme catalyses Cleavage of hydrophobic, N-terminal signal or leader sequences from secreted and periplasmic proteins.. Functionally, catalytic component of the signal peptidase complex (SPC) which catalyzes the cleavage of N-terminal signal sequences from nascent proteins as they are translocated into the lumen of the endoplasmic reticulum. Specifically cleaves N-terminal signal peptides that contain a hydrophobic alpha-helix (h-region) shorter than 18-20 amino acids. The chain is Signal peptidase complex catalytic subunit SEC11 (SEC11) from Zygosaccharomyces rouxii (strain ATCC 2623 / CBS 732 / NBRC 1130 / NCYC 568 / NRRL Y-229).